A 206-amino-acid chain; its full sequence is Ribonuclease HII (206 aa).

The RNase H type-2 domain maps to 14-206 (EFICGIDEVG…FKLRQLGEKV (193 aa)). Residues aspartate 20, glutamate 21, and aspartate 117 each contribute to the a divalent metal cation site.

This sequence belongs to the RNase HII family. Mn(2+) is required as a cofactor. Mg(2+) serves as cofactor.

The protein localises to the cytoplasm. The catalysed reaction is Endonucleolytic cleavage to 5'-phosphomonoester.. Functionally, endonuclease that specifically degrades the RNA of RNA-DNA hybrids. In Chlorobium chlorochromatii (strain CaD3), this protein is Ribonuclease HII.